We begin with the raw amino-acid sequence, 140 residues long: Large ribosomal subunit protein uL11 (140 aa).

It belongs to the universal ribosomal protein uL11 family. In terms of assembly, part of the ribosomal stalk of the 50S ribosomal subunit. Interacts with L10 and the large rRNA to form the base of the stalk. L10 forms an elongated spine to which L12 dimers bind in a sequential fashion forming a multimeric L10(L12)X complex. One or more lysine residues are methylated.

Forms part of the ribosomal stalk which helps the ribosome interact with GTP-bound translation factors. The sequence is that of Large ribosomal subunit protein uL11 from Heliobacterium modesticaldum (strain ATCC 51547 / Ice1).